A 180-amino-acid polypeptide reads, in one-letter code: Cell number regulator 7 (180 aa).

Residues 80-102 (AAAGAIYTLLACFTGFQCHWIYS) form a helical membrane-spanning segment.

The protein belongs to the cornifelin family. In terms of tissue distribution, expressed in roots, leaves, immature ears and silks. Detected preferentially in silks.

It is found in the membrane. This chain is Cell number regulator 7 (CNR7), found in Zea mays (Maize).